We begin with the raw amino-acid sequence, 132 residues long: Global transcriptional regulator Spx (132 aa).

A disulfide bond links Cys10 and Cys13.

The protein belongs to the ArsC family. Spx subfamily. In terms of assembly, interacts with the C-terminal domain of the alpha subunit of the RNAP.

The protein resides in the cytoplasm. In terms of biological role, global transcriptional regulator that plays a key role in stress response and exerts either positive or negative regulation of genes. Acts by interacting with the C-terminal domain of the alpha subunit of the RNA polymerase (RNAP). This interaction can enhance binding of RNAP to the promoter region of target genes and stimulate their transcription, or block interaction of RNAP with activator. This Enterococcus faecalis (strain ATCC 700802 / V583) protein is Global transcriptional regulator Spx.